Consider the following 208-residue polypeptide: Small ribosomal subunit protein uS4 (208 aa).

The S4 RNA-binding domain occupies 98-160 (QRLDNVVYRM…SKNNSQIVRA (63 aa)).

It belongs to the universal ribosomal protein uS4 family. Part of the 30S ribosomal subunit. Contacts protein S5. The interaction surface between S4 and S5 is involved in control of translational fidelity.

In terms of biological role, one of the primary rRNA binding proteins, it binds directly to 16S rRNA where it nucleates assembly of the body of the 30S subunit. With S5 and S12 plays an important role in translational accuracy. The chain is Small ribosomal subunit protein uS4 from Sulfurimonas denitrificans (strain ATCC 33889 / DSM 1251) (Thiomicrospira denitrificans (strain ATCC 33889 / DSM 1251)).